Here is a 483-residue protein sequence, read N- to C-terminus: Acyl-coenzyme A thioesterase 2, mitochondrial (483 aa).

At Lys104 the chain carries N6-acetyllysine. Active-site charge relay system residues include Ser294, Asp388, and His422. N6-succinyllysine is present on Lys470. The Microbody targeting signal signature appears at 481–483 (SKV).

Belongs to the C/M/P thioester hydrolase family. In terms of assembly, monomer. Strongest expression in heart, liver, muscle and kidney. Weak in placenta and pancreas.

It localises to the mitochondrion. It carries out the reaction hexadecanoyl-CoA + H2O = hexadecanoate + CoA + H(+). The enzyme catalyses tetradecanoyl-CoA + H2O = tetradecanoate + CoA + H(+). The catalysed reaction is octadecanoyl-CoA + H2O = octadecanoate + CoA + H(+). It catalyses the reaction eicosanoyl-CoA + H2O = eicosanoate + CoA + H(+). It carries out the reaction decanoyl-CoA + H2O = decanoate + CoA + H(+). The enzyme catalyses dodecanoyl-CoA + H2O = dodecanoate + CoA + H(+). The catalysed reaction is (9Z)-octadecenoyl-CoA + H2O = (9Z)-octadecenoate + CoA + H(+). It catalyses the reaction (9Z)-hexadecenoyl-CoA + H2O = (9Z)-hexadecenoate + CoA + H(+). It carries out the reaction (9E)-octadecenoyl-CoA + H2O = (9E)-octadecenoate + CoA + H(+). The enzyme catalyses (9Z,12Z)-octadecadienoyl-CoA + H2O = (9Z,12Z)-octadecadienoate + CoA + H(+). The protein operates within lipid metabolism; fatty acid metabolism. Functionally, catalyzes the hydrolysis of acyl-CoAs into free fatty acids and coenzyme A (CoASH), regulating their respective intracellular levels. Displays higher activity toward long chain acyl CoAs (C14-C20). The enzyme is involved in enhancing the hepatic fatty acid oxidation in mitochondria. This chain is Acyl-coenzyme A thioesterase 2, mitochondrial (ACOT2), found in Homo sapiens (Human).